The sequence spans 167 residues: Inclusion membrane protein G (167 aa).

2 helical membrane-spanning segments follow: residues 37–57 (LSLFAVFASGSLSILSAAVLF) and 63–83 (VLPYLLILTTALLGFVCAVIV). Disordered regions lie at residues 97-136 (KRSPEEIEGAARPSDQQESGGRLSEESASPQASPTSSTFG) and 148-167 (VSGAFDDINKDNSRSRSHSF). The segment covering 122–134 (ESASPQASPTSST) has biased composition (low complexity). A Phosphorylation-dependent binding motif motif is present at residues 161–166 (RSRSHS). Position 166 is a phosphoserine (S166).

Post-translationally, phosphorylated by chlamydial kinase Pnk1.

Its subcellular location is the secreted. The protein localises to the host vacuole. It localises to the host pathogen-containing vacuole. The protein resides in the host pathogen-containing vacuole membrane. Functionally, inclusion membrane protein probably involved in early modification events of the chlamydial inclusion. Binds to the host cell 14-3-3 beta (YWHAB); phosphorylation of Ser-166 is probably required. This chain is Inclusion membrane protein G (incG), found in Chlamydia trachomatis serovar D (strain ATCC VR-885 / DSM 19411 / UW-3/Cx).